The chain runs to 283 residues: Bifunctional protein FolD (283 aa).

Residues 165–167, Ser190, and Val231 contribute to the NADP(+) site; that span reads GRS.

This sequence belongs to the tetrahydrofolate dehydrogenase/cyclohydrolase family. Homodimer.

The enzyme catalyses (6R)-5,10-methylene-5,6,7,8-tetrahydrofolate + NADP(+) = (6R)-5,10-methenyltetrahydrofolate + NADPH. It carries out the reaction (6R)-5,10-methenyltetrahydrofolate + H2O = (6R)-10-formyltetrahydrofolate + H(+). Its pathway is one-carbon metabolism; tetrahydrofolate interconversion. Its function is as follows. Catalyzes the oxidation of 5,10-methylenetetrahydrofolate to 5,10-methenyltetrahydrofolate and then the hydrolysis of 5,10-methenyltetrahydrofolate to 10-formyltetrahydrofolate. The sequence is that of Bifunctional protein FolD from Bacillus pumilus (strain SAFR-032).